The sequence spans 129 residues: Small ribosomal subunit protein uS11 (129 aa).

The protein belongs to the universal ribosomal protein uS11 family. Part of the 30S ribosomal subunit. Interacts with proteins S7 and S18. Binds to IF-3.

Functionally, located on the platform of the 30S subunit, it bridges several disparate RNA helices of the 16S rRNA. Forms part of the Shine-Dalgarno cleft in the 70S ribosome. This chain is Small ribosomal subunit protein uS11, found in Geobacillus stearothermophilus (Bacillus stearothermophilus).